Here is a 297-residue protein sequence, read N- to C-terminus: Lymphocyte antigen 6 complex locus protein G6f (297 aa).

The N-terminal stretch at 1 to 16 (MAVLFLLLFLCGTPQA) is a signal peptide. Positions 17 to 122 (ADNMQAIYVA…HNYQNWRVYD (106 aa)) constitute an Ig-like V-type domain. Residues 17 to 235 (ADNMQAIYVA…APSTGWDMPW (219 aa)) lie on the Extracellular side of the membrane. The cysteines at positions 35 and 106 are disulfide-linked. N88 carries an N-linked (GlcNAc...) asparagine glycan. Residues 236 to 256 (ILMLLLTMGQGVVILALSIVL) traverse the membrane as a helical segment. Over 257–297 (WRQRVRGAPGRDASIPQFKPEIQVYENIHLARLGPPAHKPR) the chain is Cytoplasmic. Y281 is subject to Phosphotyrosine.

As to quaternary structure, homodimer; disulfide-linked. Interacts with GRB2 and GRB7 in a phosphorylation-dependent manner. In terms of processing, N-glycosylated.

The protein resides in the cell membrane. May play a role in the downstream signal transduction pathways involving GRB2 and GRB7. The protein is Lymphocyte antigen 6 complex locus protein G6f (LY6G6F) of Homo sapiens (Human).